Consider the following 130-residue polypeptide: S-adenosylmethionine decarboxylase proenzyme (130 aa).

Serine 63 functions as the Schiff-base intermediate with substrate; via pyruvic acid in the catalytic mechanism. Position 63 is a pyruvic acid (Ser); by autocatalysis (serine 63). The Proton acceptor; for processing activity role is filled by histidine 68. Cysteine 83 serves as the catalytic Proton donor; for catalytic activity.

Belongs to the prokaryotic AdoMetDC family. Type 1 subfamily. As to quaternary structure, heterotetramer of two alpha and two beta chains arranged as a dimer of alpha/beta heterodimers. Pyruvate serves as cofactor. Is synthesized initially as an inactive proenzyme. Formation of the active enzyme involves a self-maturation process in which the active site pyruvoyl group is generated from an internal serine residue via an autocatalytic post-translational modification. Two non-identical subunits are generated from the proenzyme in this reaction, and the pyruvate is formed at the N-terminus of the alpha chain, which is derived from the carboxyl end of the proenzyme. The post-translation cleavage follows an unusual pathway, termed non-hydrolytic serinolysis, in which the side chain hydroxyl group of the serine supplies its oxygen atom to form the C-terminus of the beta chain, while the remainder of the serine residue undergoes an oxidative deamination to produce ammonia and the pyruvoyl group blocking the N-terminus of the alpha chain.

It carries out the reaction S-adenosyl-L-methionine + H(+) = S-adenosyl 3-(methylsulfanyl)propylamine + CO2. Its pathway is amine and polyamine biosynthesis; S-adenosylmethioninamine biosynthesis; S-adenosylmethioninamine from S-adenosyl-L-methionine: step 1/1. Functionally, catalyzes the decarboxylation of S-adenosylmethionine to S-adenosylmethioninamine (dcAdoMet), the propylamine donor required for the synthesis of the polyamines spermine and spermidine from the diamine putrescine. The chain is S-adenosylmethionine decarboxylase proenzyme from Thermotoga petrophila (strain ATCC BAA-488 / DSM 13995 / JCM 10881 / RKU-1).